Consider the following 249-residue polypeptide: Isoprenyl transferase (249 aa).

The active site involves D25. D25 is a Mg(2+) binding site. Residues 26–29 (GNGR), W30, R38, H42, and 70–72 (STE) each bind substrate. The Proton acceptor role is filled by N73. Residues W74, R76, R197, and 203 to 205 (RLS) each bind substrate. E216 provides a ligand contact to Mg(2+).

The protein belongs to the UPP synthase family. In terms of assembly, homodimer. Mg(2+) serves as cofactor.

Functionally, catalyzes the condensation of isopentenyl diphosphate (IPP) with allylic pyrophosphates generating different type of terpenoids. This Streptococcus pyogenes serotype M1 protein is Isoprenyl transferase.